We begin with the raw amino-acid sequence, 297 residues long: MQIRRRPPNPAVEMGTLRYEVSVPESKPKNILEEIVWHKEKEVDYLRDKEPLVELRKKINLMPPPLDFLTTLSTGKTQLAVIAEVKKASPSKGVIRQDFEPVAIAKLYQENAATCISVLTDRKFFQGSFENLANIRENVDLPLLCKDFLIYPYQIYFARLYGADAVLLIAAILSDQDLKYFIKIVNSLGMTALVEVHTLKELDRVLGIEGVKLIGINNRNLEDFSVDLQTTFQLMEARKKELEKLGILVVSESGIHSYEDINFMINAGVNAVLVGESLVKKTNPGTALLQLFNENKS.

The protein belongs to the TrpC family.

It carries out the reaction 1-(2-carboxyphenylamino)-1-deoxy-D-ribulose 5-phosphate + H(+) = (1S,2R)-1-C-(indol-3-yl)glycerol 3-phosphate + CO2 + H2O. Its pathway is amino-acid biosynthesis; L-tryptophan biosynthesis; L-tryptophan from chorismate: step 4/5. The polypeptide is Indole-3-glycerol phosphate synthase (Trichodesmium erythraeum (strain IMS101)).